We begin with the raw amino-acid sequence, 445 residues long: Inner membrane metabolite transport protein YgcS (445 aa).

Residues 1–22 are Cytoplasmic-facing; it reads MNTSPVRMDDLPLNRFHCRIAA. The helical transmembrane segment at 23-43 threads the bilayer; that stretch reads LTFGAHLTDGYVLGVIGYAII. Residues 44–56 are Periplasmic-facing; the sequence is QLTPAMQLTPFMA. A helical membrane pass occupies residues 57 to 77; sequence GMIGGSALLGLFLGSLVLGWI. Residues 78-85 lie on the Cytoplasmic side of the membrane; the sequence is SDHIGRQK. Residues 86 to 106 form a helical membrane-spanning segment; the sequence is IFTFSFLLITLASFLQFFATT. The Periplasmic portion of the chain corresponds to 107-114; sequence PEHLIGLR. A helical membrane pass occupies residues 115–135; it reads ILIGIGLGGDYSVGHTLLAEF. The Cytoplasmic segment spans residues 136–142; the sequence is SPRRHRG. The chain crosses the membrane as a helical span at residues 143 to 163; sequence ILLGAFSVVWTVGYVLASIAG. Over 164–175 the chain is Periplasmic; sequence HHFISENPEAWR. The helical transmembrane segment at 176–196 threads the bilayer; that stretch reads WLLASAALPALLITLLRWGTP. Residues 197–253 are Cytoplasmic-facing; that stretch reads ESPRWLLRQGRFAEAHAIVHRYFGPHVLLGDEVVTATHKHIKTLFSSRYWRRTAFNS. Residues 254-274 form a helical membrane-spanning segment; the sequence is VFFVCLVIPWFVIYTWLPTIA. The Periplasmic segment spans residues 275-286; that stretch reads QTIGLEDALTAS. The helical transmembrane segment at 287-307 threads the bilayer; the sequence is LMLNALLIVGALLGLVLTHLL. Residues 308 to 311 lie on the Cytoplasmic side of the membrane; the sequence is AHRK. A helical transmembrane segment spans residues 312 to 332; sequence FLLGSFLLLAATLVVMACLPS. The Periplasmic segment spans residues 333–337; sequence GSSLT. The chain crosses the membrane as a helical span at residues 338–358; that stretch reads LLLFVLFSTTISAVSNLVGIL. Residues 359–369 lie on the Cytoplasmic side of the membrane; sequence PAESFPTDIRS. The helical transmembrane segment at 370–390 threads the bilayer; it reads LGVGFATAMSRLGAAVSTGLL. The Periplasmic portion of the chain corresponds to 391-400; that stretch reads PWVLAQWGMQ. Residues 401–421 traverse the membrane as a helical segment; the sequence is VTLLLLATVLLVGFVVTWLWA. Over 422–445 the chain is Cytoplasmic; sequence PETKALPLVAAGNVGGANEHSVSV.

This sequence belongs to the major facilitator superfamily. Sugar transporter (TC 2.A.1.1) family.

The protein resides in the cell inner membrane. In Escherichia coli (strain K12), this protein is Inner membrane metabolite transport protein YgcS (ygcS).